The sequence spans 381 residues: Protein TRIGALACTOSYLDIACYLGLYCEROL 2, chloroplastic (381 aa).

The N-terminal 45 residues, 1 to 45 (MIGNPVIQVPSSLMPSSSMIACPRVSPNGVPYLPPKPRTRHLVVR), are a transit peptide targeting the chloroplast. Residues 46-96 (AASNSDAAHGQPSSDGGKNPLTVVLDVPRNIWRQTLKPLSDFGFGKRSIWE) lie on the Stromal side of the membrane. Residues 97–117 (GGVGLFIVSGATLLALSWAWL) traverse the membrane as a helical segment. Over 118-381 (RGFQMRSKFR…LLIKSLSRLL (264 aa)) the chain is Chloroplast intermembrane.

Homomultimer. Substrate-binding subunit of the TGD complex, a lipid translocator at the inner chloroplast envelope membrane made of TGD1, TGD2 and TGD3. Interacts with TGD1 and TGD3 with an overall subunit stoichiometry of 2 TGD1, 2 TGD3 and 8 to 12 TGD2. Interacts with TGD5.

It localises to the plastid. It is found in the chloroplast inner membrane. In terms of biological role, component of a phosphatidic acid/lipid transport complex in the chloroplast envelope. Specifically binds phosphatidic acid (PA). Involved in lipid transfer from the endoplasmic reticulum (ER) to plastids, and necessary for thylakoids formation. In Arabidopsis thaliana (Mouse-ear cress), this protein is Protein TRIGALACTOSYLDIACYLGLYCEROL 2, chloroplastic.